The chain runs to 259 residues: uncharacterized protein (259 aa).

Residues M1 to G22 form the signal peptide. C23 carries the N-palmitoyl cysteine lipid modification. C23 carries S-diacylglycerol cysteine lipidation.

It belongs to the staphylococcal tandem lipoprotein family.

The protein localises to the cell membrane. This is an uncharacterized protein from Staphylococcus epidermidis (strain ATCC 35984 / DSM 28319 / BCRC 17069 / CCUG 31568 / BM 3577 / RP62A).